Reading from the N-terminus, the 260-residue chain is (+)-borneol dehydrogenase 1 (260 aa).

NAD(+)-binding positions include 20–26, D44, 67–68, and 94–96; these read GGASGIG, DV, and NAG. The active-site Proton donor is the S148. Residues Y161, K165, and T196 each coordinate NAD(+). Catalysis depends on Y161, which acts as the Proton acceptor. The Proton donor/acceptor role is filled by K165.

This sequence belongs to the short-chain dehydrogenases/reductases (SDR) family.

The enzyme catalyses (1R,2S,4R)-borneol + NAD(+) = (1R,4R)-camphor + NADH + H(+). Its function is as follows. Involved in the biosynthesis of monoterpene natural products related to camphor. Catalayzes the oxidation of (+)-borneol to (+)-camphor. Shows absolute selectivity towards (+)-borneol. Catalyzes the oxidation of (+)-isoborneol to (-)-camphor. Shows absolute selectivity towards (+)-isoborneol. The sequence is that of (+)-borneol dehydrogenase 1 from Salvia officinalis (Sage).